Here is an 824-residue protein sequence, read N- to C-terminus: Vesicle-fusing ATPase (824 aa).

ATP-binding positions include 582 to 587 (RGMIVW) and 622 to 629 (AKTGKTSL). Thr-627 lines the Mg(2+) pocket.

It belongs to the AAA ATPase family. Homohexamer. The cofactor is Mg(2+).

It localises to the cytoplasm. The catalysed reaction is ATP + H2O = ADP + phosphate + H(+). Functionally, required for vesicle-mediated transport. Catalyzes the fusion of transport vesicles within the Golgi cisternae. Is also required for transport from the endoplasmic reticulum to the Golgi stack. Seems to function as a fusion protein required for the delivery of cargo proteins to all compartments of the Golgi stack independent of vesicle origin. The chain is Vesicle-fusing ATPase (nsf-1) from Caenorhabditis elegans.